Reading from the N-terminus, the 292-residue chain is 5,10-methylenetetrahydrofolate reductase (292 aa).

The Proton donor/acceptor role is filled by Glu26. Thr57 contributes to the NADH binding site. FAD is bound by residues Tyr58, Ala60, His86, Arg116, Gly117, Asp118, Ala130, Tyr150, His154, Ala157, Asp163, Asn166, Arg169, and Lys170. Asp118 provides a ligand contact to (6S)-5-methyl-5,6,7,8-tetrahydrofolate. Gln181 contacts NADH. Positions 181, 217, and 277 each coordinate (6S)-5-methyl-5,6,7,8-tetrahydrofolate.

It belongs to the methylenetetrahydrofolate reductase family. Requires FAD as cofactor.

The catalysed reaction is (6S)-5-methyl-5,6,7,8-tetrahydrofolate + NAD(+) = (6R)-5,10-methylene-5,6,7,8-tetrahydrofolate + NADH + H(+). The protein operates within one-carbon metabolism; tetrahydrofolate interconversion. It participates in amino-acid biosynthesis; L-methionine biosynthesis via de novo pathway. Its function is as follows. Catalyzes the NADH-dependent reduction of 5,10-methylenetetrahydrofolate to 5-methyltetrahydrofolate. Is required to provide the methyl group necessary for methionine synthetase to convert homocysteine to methionine; the methyl group is given by 5-methyltetrahydrofolate. The protein is 5,10-methylenetetrahydrofolate reductase (metF) of Neisseria meningitidis serogroup B (strain ATCC BAA-335 / MC58).